Reading from the N-terminus, the 357-residue chain is Histidinol-phosphate aminotransferase (357 aa).

N6-(pyridoxal phosphate)lysine is present on lysine 212.

It belongs to the class-II pyridoxal-phosphate-dependent aminotransferase family. Histidinol-phosphate aminotransferase subfamily. Homodimer. It depends on pyridoxal 5'-phosphate as a cofactor.

The catalysed reaction is L-histidinol phosphate + 2-oxoglutarate = 3-(imidazol-4-yl)-2-oxopropyl phosphate + L-glutamate. The protein operates within amino-acid biosynthesis; L-histidine biosynthesis; L-histidine from 5-phospho-alpha-D-ribose 1-diphosphate: step 7/9. The polypeptide is Histidinol-phosphate aminotransferase (Pectobacterium atrosepticum (strain SCRI 1043 / ATCC BAA-672) (Erwinia carotovora subsp. atroseptica)).